Consider the following 257-residue polypeptide: ATP synthase delta chain, chloroplastic (257 aa).

The transit peptide at 1–70 directs the protein to the chloroplast; sequence MAALQNPVAL…PRGGALGTRM (70 aa).

This sequence belongs to the ATPase delta chain family. In terms of assembly, F-type ATPases have 2 components, CF(1) - the catalytic core - and CF(0) - the membrane proton channel. CF(1) has five subunits: alpha(3), beta(3), gamma(1), delta(1), epsilon(1). CF(0) has three main subunits: a, b and c.

The protein resides in the plastid. Its subcellular location is the chloroplast thylakoid membrane. In terms of biological role, this protein seems to be part of the stalk that links CF(0) to CF(1). It either transmits conformational changes from CF(0) into CF(1) or is implicated in proton conduction. The chain is ATP synthase delta chain, chloroplastic (ATPD) from Spinacia oleracea (Spinach).